The chain runs to 287 residues: mRNA-capping enzyme small subunit (287 aa).

In terms of assembly, heterodimer of a large and a small subunit.

The protein localises to the virion. The catalysed reaction is a 5'-end (5'-triphosphoguanosine)-ribonucleoside in mRNA + S-adenosyl-L-methionine = a 5'-end (N(7)-methyl 5'-triphosphoguanosine)-ribonucleoside in mRNA + S-adenosyl-L-homocysteine. Catalyzes the last reaction in the mRNA cap formation pathway. The chain is mRNA-capping enzyme small subunit from Sus scrofa (Pig).